A 458-amino-acid chain; its full sequence is Putative long chain fatty acid-CoA ligase VraA (458 aa).

Belongs to the ATP-dependent AMP-binding enzyme family.

This Staphylococcus aureus (strain MRSA252) protein is Putative long chain fatty acid-CoA ligase VraA (vraA).